The following is a 469-amino-acid chain: Zinc finger CCCH domain-containing protein 30 (469 aa).

Residues 415–443 (VRPMKPCAYFNSPKGCRNGASCTFLHDAS) form a C3H1-type zinc finger. The tract at residues 444 to 469 (APTRKDHQKQKGSKRIKLDNTMGGRN) is disordered. Positions 449 to 458 (DHQKQKGSKR) are enriched in basic residues.

The polypeptide is Zinc finger CCCH domain-containing protein 30 (Oryza sativa subsp. japonica (Rice)).